Consider the following 229-residue polypeptide: Vacuolar protein sorting-associated protein 24 homolog 1 (229 aa).

A coiled-coil region spans residues lysine 15 to valine 60. A disordered region spans residues valine 193–glutamate 215. Over residues alanine 206–glutamate 215 the composition is skewed to acidic residues.

Belongs to the SNF7 family. In terms of assembly, component of the endosomal sorting required for transport complex III (ESCRT-III), composed at least of VPS2, VPS20, VPS24 and VPS32. Interacts with SKD1.

It localises to the endosome. Component of the ESCRT-III complex, which is required for multivesicular bodies (MVBs) formation and sorting of endosomal cargo proteins into MVBs. The ESCRT-III complex is probably involved in the concentration of MVB cargo. In Arabidopsis thaliana (Mouse-ear cress), this protein is Vacuolar protein sorting-associated protein 24 homolog 1 (VPS24-1).